Reading from the N-terminus, the 147-residue chain is Cytochrome c-type biogenesis protein CcmE (147 aa).

Topologically, residues Met1–Arg9 are cytoplasmic. Residues Ile10–Ala30 form a helical; Signal-anchor for type II membrane protein membrane-spanning segment. The Periplasmic segment spans residues Met31–Ser147. 2 residues coordinate heme: His123 and Tyr127.

This sequence belongs to the CcmE/CycJ family.

It is found in the cell inner membrane. Functionally, heme chaperone required for the biogenesis of c-type cytochromes. Transiently binds heme delivered by CcmC and transfers the heme to apo-cytochromes in a process facilitated by CcmF and CcmH. In Ruegeria sp. (strain TM1040) (Silicibacter sp.), this protein is Cytochrome c-type biogenesis protein CcmE.